The sequence spans 217 residues: Pyridoxine/pyridoxamine 5'-phosphate oxidase (217 aa).

Residues 66–71 (RMVLLK), 81–82 (FT), arginine 87, lysine 88, and glutamine 110 contribute to the FMN site. Lysine 71 lines the substrate pocket. 3 residues coordinate substrate: tyrosine 128, arginine 132, and serine 136. FMN-binding positions include 145–146 (QS) and tryptophan 190. 196-198 (RLH) provides a ligand contact to substrate. Arginine 200 is a binding site for FMN.

It belongs to the pyridoxamine 5'-phosphate oxidase family. In terms of assembly, homodimer. The cofactor is FMN.

It carries out the reaction pyridoxamine 5'-phosphate + O2 + H2O = pyridoxal 5'-phosphate + H2O2 + NH4(+). The enzyme catalyses pyridoxine 5'-phosphate + O2 = pyridoxal 5'-phosphate + H2O2. The protein operates within cofactor metabolism; pyridoxal 5'-phosphate salvage; pyridoxal 5'-phosphate from pyridoxamine 5'-phosphate: step 1/1. It functions in the pathway cofactor metabolism; pyridoxal 5'-phosphate salvage; pyridoxal 5'-phosphate from pyridoxine 5'-phosphate: step 1/1. In terms of biological role, catalyzes the oxidation of either pyridoxine 5'-phosphate (PNP) or pyridoxamine 5'-phosphate (PMP) into pyridoxal 5'-phosphate (PLP). In Psychromonas ingrahamii (strain DSM 17664 / CCUG 51855 / 37), this protein is Pyridoxine/pyridoxamine 5'-phosphate oxidase.